The following is an 804-amino-acid chain: Leucine--tRNA ligase (804 aa).

Residues 39-50 carry the 'HIGH' region motif; sequence PFPSGKGLHVGH. The 'KMSKS' region motif lies at 573–577; sequence KMSKS. Position 576 (K576) interacts with ATP.

Belongs to the class-I aminoacyl-tRNA synthetase family.

The protein localises to the cytoplasm. The catalysed reaction is tRNA(Leu) + L-leucine + ATP = L-leucyl-tRNA(Leu) + AMP + diphosphate. The protein is Leucine--tRNA ligase of Lactobacillus helveticus (strain DPC 4571).